A 382-amino-acid polypeptide reads, in one-letter code: Mannitol-1-phosphate 5-dehydrogenase (382 aa).

3–14 (ALHFGAGNIGRG) is a binding site for NAD(+).

The protein belongs to the mannitol dehydrogenase family.

It catalyses the reaction D-mannitol 1-phosphate + NAD(+) = beta-D-fructose 6-phosphate + NADH + H(+). This Salmonella schwarzengrund (strain CVM19633) protein is Mannitol-1-phosphate 5-dehydrogenase.